Reading from the N-terminus, the 170-residue chain is Translation machinery-associated protein 16 homolog (170 aa).

It belongs to the TMA16 family.

In Dictyostelium discoideum (Social amoeba), this protein is Translation machinery-associated protein 16 homolog.